Reading from the N-terminus, the 463-residue chain is Maintenance of mitochondrial morphology protein 1-2 (463 aa).

Over 1 to 23 (MVIPAELIQKALKQQSGWGFTEG) the chain is Lumenal. Residues 24–44 (LVLGQLSVIITVIIILKFVIF) traverse the membrane as a helical segment. At 45–463 (AENKSPKKGN…TGADTASGSS (419 aa)) the chain is on the cytoplasmic side. Residues 72 to 152 (GGQTANGVKT…VAGSTSNLAV (81 aa)) form a disordered region. The segment covering 108 to 122 (RPGSSRVSMVRSTSG) has biased composition (polar residues). The region spanning 205 to 435 (APESLDWFNV…EPHQMIFILP (231 aa)) is the SMP-LTD domain.

Belongs to the MMM1 family. In terms of assembly, homodimer. Component of the ER-mitochondria encounter structure (ERMES) or MDM complex, composed of MMM1, MDM10, MDM12 and MDM34. An MMM1 homodimer associates with one molecule of MDM12 on each side in a pairwise head-to-tail manner, and the SMP-LTD domains of MMM1 and MDM12 generate a continuous hydrophobic tunnel for phospholipid trafficking.

It is found in the endoplasmic reticulum membrane. Component of the ERMES/MDM complex, which serves as a molecular tether to connect the endoplasmic reticulum (ER) and mitochondria. Components of this complex are involved in the control of mitochondrial shape and protein biogenesis, and function in nonvesicular lipid trafficking between the ER and mitochondria. The MDM12-MMM1 subcomplex functions in the major beta-barrel assembly pathway that is responsible for biogenesis of all outer membrane beta-barrel proteins, and acts in a late step after the SAM complex. The MDM10-MDM12-MMM1 subcomplex further acts in the TOM40-specific pathway after the action of the MDM12-MMM1 complex. Essential for establishing and maintaining the structure of mitochondria and maintenance of mtDNA nucleoids. The protein is Maintenance of mitochondrial morphology protein 1-2 of Yarrowia lipolytica (strain CLIB 122 / E 150) (Yeast).